Here is an 815-residue protein sequence, read N- to C-terminus: uncharacterized protein (815 aa).

4 disordered regions span residues 123-183, 249-274, 592-668, and 765-815; these read QSNT…QPST, NVNNNKNNKNQNNNNNNNIENSNNTN, IKQN…NLNS, and NNEE…EEIK. 2 stretches are compositionally biased toward polar residues: residues 135–154 and 174–183; these read SIITNSDSPRLIVSDTTSTT and DSITVLQPST. The span at 595-611 shows a compositional bias: low complexity; sequence NGSSSSNNNSKLSSTNS. Polar residues predominate over residues 612-639; that stretch reads GQTSDNPINSSNGGQSIKKQGSNLSLNR. A compositionally biased stretch (low complexity) spans 640 to 668; the sequence is QQSSTKLNNQSNNNNNNNANTTNQNNLNS. Residues 765–782 show a composition bias toward basic and acidic residues; that stretch reads NNEEHNNNNKENNNENNK. Residues 783-809 are compositionally biased toward low complexity; that stretch reads ENINNNNNIINNNNDNNCNENNNNCNE.

This is an uncharacterized protein from Dictyostelium discoideum (Social amoeba).